The primary structure comprises 441 residues: Histidine--tRNA ligase (441 aa).

The protein belongs to the class-II aminoacyl-tRNA synthetase family. Homodimer.

It is found in the cytoplasm. The catalysed reaction is tRNA(His) + L-histidine + ATP = L-histidyl-tRNA(His) + AMP + diphosphate + H(+). In Synechococcus sp. (strain WH7803), this protein is Histidine--tRNA ligase.